The primary structure comprises 82 residues: RNA-binding protein Hfq (82 aa).

A Sm domain is found at 9–69 (DHFLNQLRKE…ISTFSPARNV (61 aa)).

This sequence belongs to the Hfq family. As to quaternary structure, homohexamer.

In terms of biological role, RNA chaperone that binds small regulatory RNA (sRNAs) and mRNAs to facilitate mRNA translational regulation in response to envelope stress, environmental stress and changes in metabolite concentrations. Also binds with high specificity to tRNAs. In Exiguobacterium sp. (strain ATCC BAA-1283 / AT1b), this protein is RNA-binding protein Hfq.